A 480-amino-acid polypeptide reads, in one-letter code: uncharacterized protein (480 aa).

A signal peptide spans 1 to 21 (MSRYFSFFFLALFLHYRIIVA). 2 disordered regions span residues 38-72 (SSHL…SAEC) and 116-147 (SPLI…NDQT). A compositionally biased stretch (low complexity) spans 51–60 (LTQSHSSLSD). The segment covering 133-144 (LKTSSEAQGDTN) has biased composition (polar residues). Residues 153-173 (YAVEIACVCFLIALAINYFVG) traverse the membrane as a helical segment. The segment at 404–480 (QARNKTESGR…VPKMKMSRSH (77 aa)) is disordered. A compositionally biased stretch (basic and acidic residues) spans 407 to 465 (NKTESGRQKAAEEAYKELHNARQEALQKKKAEKKKMMEEAEAKMSAEVIRKKEAKERAR). Residues 411-467 (SGRQKAAEEAYKELHNARQEALQKKKAEKKKMMEEAEAKMSAEVIRKKEAKERARQV) are a coiled coil. The segment covering 466–480 (QVKKAVPKMKMSRSH) has biased composition (basic residues).

The protein localises to the membrane. This is an uncharacterized protein from Arabidopsis thaliana (Mouse-ear cress).